A 299-amino-acid chain; its full sequence is MGILALVTDAVSLPIDYDMPPLLEACRTVGITAEVCDWEDGTVDWSRFEAVVFRSPWTWAERQAEFLAFCERVSHVTRLITPMPLVRWALDKRYLADLAAHGVPVIPTTVVAPGSDALAAVRDFLAARPEAREFVVKPTDGCYSKDVQRYQRSLAEPASRHVARLLANGSHVILQPYVESVDRHGETDLTFFDGVYSHAIHKGAMLMPDGTVHVPTLDFRQARDADEDQRAVAAAALAASVAHLGLDLPLVCGRVDLVRGADGSPMVLEMELCEPSLNLTFSEDGALRFAQALAERLKP.

ATP-binding residues include Lys-92, Lys-137, Ser-144, Gln-175, Pro-176, and Val-178. One can recognise an ATP-grasp domain in the interval 95-298; that stretch reads LADLAAHGVP…FAQALAERLK (204 aa). Catalysis depends on residues Arg-220 and Arg-254. Mg(2+) contacts are provided by Glu-269 and Glu-271. Residue Glu-271 is part of the active site.

As to quaternary structure, monomer. The cofactor is Mg(2+).

It catalyses the reaction O-ureido-D-serine + ATP + H2O + H(+) = D-cycloserine + NH4(+) + ADP + phosphate + CO2. In terms of biological role, involved in the biosynthesis of the antibiotic D-cycloserine (DCS), a cyclic structural analog of D-alanine, used as an antitubercular agent. Catalyzes the synthesis of D-cycloserine from O-ureido-D-serine (D-OUS). It reacts with D-OUS, D-homocysteine and beta-aminooxy-D-alanine. In Streptomyces lavendulae, this protein is Cycloserine biosynthesis protein DcsG.